The sequence spans 151 residues: Large ribosomal subunit protein bL9 (151 aa).

The protein belongs to the bacterial ribosomal protein bL9 family.

Binds to the 23S rRNA. This chain is Large ribosomal subunit protein bL9, found in Prochlorococcus marinus (strain MIT 9215).